The following is a 193-amino-acid chain: Orotate phosphoribosyltransferase (193 aa).

5-phospho-alpha-D-ribose 1-diphosphate contacts are provided by residues arginine 102, lysine 103, lysine 106, histidine 108, and 129–137 (EDVVTTGGS). Orotate contacts are provided by threonine 133 and arginine 161.

Belongs to the purine/pyrimidine phosphoribosyltransferase family. PyrE subfamily. As to quaternary structure, homodimer. Requires Mg(2+) as cofactor.

The enzyme catalyses orotidine 5'-phosphate + diphosphate = orotate + 5-phospho-alpha-D-ribose 1-diphosphate. The protein operates within pyrimidine metabolism; UMP biosynthesis via de novo pathway; UMP from orotate: step 1/2. Its function is as follows. Catalyzes the transfer of a ribosyl phosphate group from 5-phosphoribose 1-diphosphate to orotate, leading to the formation of orotidine monophosphate (OMP). This chain is Orotate phosphoribosyltransferase, found in Prochlorococcus marinus (strain NATL1A).